We begin with the raw amino-acid sequence, 302 residues long: MNQTAINRADARTRFIFDDMPVRGLHVRLENVWHHIVKQKNYPAAIRCALGELLAAGVLLSGNLKNEGTLIVQVQGQGKLKMLVAEATSDRTVRATARWDETAEIADDESLGDLLGGNGVFVLTLQPKDGEPWQGVVPLEGGSIAQMLVNYMKRSEQLDTHIALSASDEAAGGLLVQRLPEEVLDEEAWEHVSTLARTLTAEELAELDAQHVLYRLFHETPPRVFEPETFESSCTCSRGKVSDMLLMLGGEEVGGVVAEQGSIEVDCDFCHSKYVFDETDVNALFGEDVVGVAKGLPRHTVQ.

2 disulfide bridges follow: C234-C236 and C267-C270.

This sequence belongs to the HSP33 family. Under oxidizing conditions two disulfide bonds are formed involving the reactive cysteines. Under reducing conditions zinc is bound to the reactive cysteines and the protein is inactive.

The protein resides in the cytoplasm. In terms of biological role, redox regulated molecular chaperone. Protects both thermally unfolding and oxidatively damaged proteins from irreversible aggregation. Plays an important role in the bacterial defense system toward oxidative stress. The sequence is that of 33 kDa chaperonin from Neisseria gonorrhoeae (strain ATCC 700825 / FA 1090).